The chain runs to 398 residues: Enoyl-[acyl-carrier-protein] reductase [NADH] (398 aa).

NAD(+) contacts are provided by residues 48-53 (GASTGY), 74-75 (FE), 111-112 (DA), and 139-140 (LA). Y225 is a binding site for substrate. Y235 serves as the catalytic Proton donor. NAD(+) contacts are provided by residues K244 and 273–275 (VVT).

This sequence belongs to the TER reductase family. In terms of assembly, monomer.

It catalyses the reaction a 2,3-saturated acyl-[ACP] + NAD(+) = a (2E)-enoyl-[ACP] + NADH + H(+). Its pathway is lipid metabolism; fatty acid biosynthesis. Functionally, involved in the final reduction of the elongation cycle of fatty acid synthesis (FAS II). Catalyzes the reduction of a carbon-carbon double bond in an enoyl moiety that is covalently linked to an acyl carrier protein (ACP). The protein is Enoyl-[acyl-carrier-protein] reductase [NADH] of Pseudomonas fluorescens (strain ATCC BAA-477 / NRRL B-23932 / Pf-5).